We begin with the raw amino-acid sequence, 341 residues long: tRNA N6-adenosine threonylcarbamoyltransferase (341 aa).

Positions 118 and 122 each coordinate Fe cation. Substrate contacts are provided by residues 141-145 (LVSGG), aspartate 174, glycine 187, and asparagine 281. Aspartate 309 provides a ligand contact to Fe cation.

This sequence belongs to the KAE1 / TsaD family. Fe(2+) serves as cofactor.

The protein resides in the cytoplasm. It carries out the reaction L-threonylcarbamoyladenylate + adenosine(37) in tRNA = N(6)-L-threonylcarbamoyladenosine(37) in tRNA + AMP + H(+). Required for the formation of a threonylcarbamoyl group on adenosine at position 37 (t(6)A37) in tRNAs that read codons beginning with adenine. Is involved in the transfer of the threonylcarbamoyl moiety of threonylcarbamoyl-AMP (TC-AMP) to the N6 group of A37, together with TsaE and TsaB. TsaD likely plays a direct catalytic role in this reaction. This chain is tRNA N6-adenosine threonylcarbamoyltransferase, found in Desulfitobacterium hafniense (strain Y51).